Consider the following 286-residue polypeptide: Phosphoribosylaminoimidazole-succinocarboxamide synthase (286 aa).

Belongs to the SAICAR synthetase family.

The enzyme catalyses 5-amino-1-(5-phospho-D-ribosyl)imidazole-4-carboxylate + L-aspartate + ATP = (2S)-2-[5-amino-1-(5-phospho-beta-D-ribosyl)imidazole-4-carboxamido]succinate + ADP + phosphate + 2 H(+). Its pathway is purine metabolism; IMP biosynthesis via de novo pathway; 5-amino-1-(5-phospho-D-ribosyl)imidazole-4-carboxamide from 5-amino-1-(5-phospho-D-ribosyl)imidazole-4-carboxylate: step 1/2. The protein is Phosphoribosylaminoimidazole-succinocarboxamide synthase of Mannheimia succiniciproducens (strain KCTC 0769BP / MBEL55E).